The primary structure comprises 843 residues: Major vault protein alpha (843 aa).

Ala-2 carries the post-translational modification N-acetylalanine. 9 MVP repeats span residues 2-56 (ADLN…IPQR), 57-111 (NYCT…KVTA), 112-163 (LQVV…EEIK), 164-216 (ATII…EIVN), 217-272 (AYVL…GEVH), 273-324 (ITTL…IHNI), 325-376 (YVLT…KRES), 377-442 (IPLD…STRV), and 443-505 (VTYR…FLGP). A disordered region spans residues 643–663 (QEAAARHEAERLEQGARGRLE). Positions 646–663 (AARHEAERLEQGARGRLE) are enriched in basic and acidic residues.

In terms of assembly, the vault ribonucleoprotein particle is a huge (400 A x 670 A) cage structure of 12.9 MDa. It consists of a dimer of half-vaults, with each half-vault comprising 39 identical major vault protein (MVP) chains. Dictyostelium is one of the few organisms in which the major component is actually two proteins (alpha and beta).

Its subcellular location is the cytoplasm. The protein resides in the nucleus. Functionally, unknown, though MVP-alpha is required for normal vault structure. This is Major vault protein alpha (mvpA) from Dictyostelium discoideum (Social amoeba).